The primary structure comprises 450 residues: Putative mediator of RNA polymerase II transcription subunit 27 (450 aa).

Residues 15–118 (QQQQAQQHQQ…QKLKKSMDLV (104 aa)) adopt a coiled-coil conformation.

The protein belongs to the Mediator complex subunit 27 family. Component of the Mediator complex.

The protein resides in the nucleus. Functionally, component of the Mediator complex, a coactivator involved in the regulated transcription of nearly all RNA polymerase II-dependent genes. Mediator functions as a bridge to convey information from gene-specific regulatory proteins to the basal RNA polymerase II transcription machinery. Mediator is recruited to promoters by direct interactions with regulatory proteins and serves as a scaffold for the assembly of a functional preinitiation complex with RNA polymerase II and the general transcription factors. In Dictyostelium discoideum (Social amoeba), this protein is Putative mediator of RNA polymerase II transcription subunit 27 (med27).